Consider the following 217-residue polypeptide: Large ribosomal subunit protein bL25 (217 aa).

The disordered stretch occupies residues 187 to 217 (STPSGLEVEEETGEEESAEPEVIEKGKKEEE). Residues 193–207 (EVEEETGEEESAEPE) are compositionally biased toward acidic residues. The segment covering 208–217 (VIEKGKKEEE) has biased composition (basic and acidic residues).

It belongs to the bacterial ribosomal protein bL25 family. CTC subfamily. In terms of assembly, part of the 50S ribosomal subunit; part of the 5S rRNA/L5/L18/L25 subcomplex. Contacts the 5S rRNA. Binds to the 5S rRNA independently of L5 and L18.

This is one of the proteins that binds to the 5S RNA in the ribosome where it forms part of the central protuberance. The sequence is that of Large ribosomal subunit protein bL25 from Thermosipho africanus (strain TCF52B).